Consider the following 231-residue polypeptide: Hypoxanthine-guanine-xanthine phosphoribosyltransferase (231 aa).

GMP is bound by residues K77, 144–152 (EDIIDTGKT), K176, and D204. D148 (proton acceptor) is an active-site residue. Residue D204 participates in Mg(2+) binding.

Belongs to the purine/pyrimidine phosphoribosyltransferase family. Homotetramer. The cofactor is Mg(2+).

The protein resides in the cytoplasm. The catalysed reaction is IMP + diphosphate = hypoxanthine + 5-phospho-alpha-D-ribose 1-diphosphate. It carries out the reaction GMP + diphosphate = guanine + 5-phospho-alpha-D-ribose 1-diphosphate. The enzyme catalyses XMP + diphosphate = xanthine + 5-phospho-alpha-D-ribose 1-diphosphate. Its pathway is purine metabolism; GMP biosynthesis via salvage pathway; GMP from guanine: step 1/1. It participates in purine metabolism; IMP biosynthesis via salvage pathway; IMP from hypoxanthine: step 1/1. It functions in the pathway purine metabolism; XMP biosynthesis via salvage pathway; XMP from xanthine: step 1/1. Its function is as follows. Catalyzes the transfer of a ribosyl phosphate group from 5-phosphoribose 1-diphosphate to the N(9) of hypoxanthine, guanine or xanthine, leading to IMP, GMP and XMP, respectively. Plays a central role in the generation of purine nucleotides through the purine salvage pathway. The chain is Hypoxanthine-guanine-xanthine phosphoribosyltransferase (LACZ) from Plasmodium falciparum (isolate K1 / Thailand).